A 575-amino-acid chain; its full sequence is Isocitrate dehydrogenase kinase/phosphatase (575 aa).

ATP is bound by residues Ala315–Met321 and Lys336. The active site involves Asp371.

It belongs to the AceK family.

It localises to the cytoplasm. It carries out the reaction L-seryl-[isocitrate dehydrogenase] + ATP = O-phospho-L-seryl-[isocitrate dehydrogenase] + ADP + H(+). Functionally, bifunctional enzyme which can phosphorylate or dephosphorylate isocitrate dehydrogenase (IDH) on a specific serine residue. This is a regulatory mechanism which enables bacteria to bypass the Krebs cycle via the glyoxylate shunt in response to the source of carbon. When bacteria are grown on glucose, IDH is fully active and unphosphorylated, but when grown on acetate or ethanol, the activity of IDH declines drastically concomitant with its phosphorylation. This is Isocitrate dehydrogenase kinase/phosphatase from Yersinia pseudotuberculosis serotype O:1b (strain IP 31758).